The sequence spans 475 residues: MYKVAKASQYLVITGIGIKDIKLAKKAWILPGQSYSVFDLSPVNYTFEVQAMSAEKLPFVLPAVFTIGPRVDDKESLLKYAKLISPHDKLSNHVKELVQGIIEGETRVLAASMTMEEVFRGTKEFKQEVFGKVQLELNQFGLLIYNANVKQLVDVPGHEYFSYLGQKTQMEAANQARVDVSEAKMKGEIGSKLREGQTLQNAAKIDAETKIIAMQRAGEGDKEGIKVRTEVKVFENQREAEVAEANSELAKKKAAWTKAAQVAEVEAAKAVALRDAELQGEVERMNALTTTEKLKAEFLSKASVQYETKVQEANWELYKKQKEAEAILYEKKAEAEAQKALADATFYARTQAAEAELYAKKKEAEGIVTLGNAQGVYLSALLNALGNNYTAVRDFLMINGGMFQEIAKINAEAVRGLEPKISIWTNGGDNSGGEGAMKEVAGVYKMLPPLFKTVHEQTGMLPPAWMGVLPDKNLN.

Coiled-coil stretches lie at residues 235-255 (ENQR…KKAA) and 305-325 (QYET…KEAE).

Belongs to the band 7/mec-2 family. Flotillin subfamily. As to expression, expressed in roots and nodules. Primarily expressed in vascular tissues. Upon induction of nodulation, expansion of expression in the root cortex in the region of elongating root hairs, which will eventually become colonized by bacteria. Expressed in the infection zone in nodules.

It localises to the membrane. It is found in the caveola. The protein resides in the cell membrane. Functionally, may act as a scaffolding protein within caveolar membranes, functionally participating in formation of caveolae or caveolae-like vesicles. Required for normal infection threads initiation and elongation and nodulation. Probably involved in polar growth of the infection thread. This is Flotillin-like protein 4 (FLOT4) from Medicago truncatula (Barrel medic).